The sequence spans 142 residues: Large ribosomal subunit protein uL11 (142 aa).

The protein belongs to the universal ribosomal protein uL11 family. Part of the ribosomal stalk of the 50S ribosomal subunit. Interacts with L10 and the large rRNA to form the base of the stalk. L10 forms an elongated spine to which L12 dimers bind in a sequential fashion forming a multimeric L10(L12)X complex. One or more lysine residues are methylated.

Forms part of the ribosomal stalk which helps the ribosome interact with GTP-bound translation factors. This is Large ribosomal subunit protein uL11 from Shewanella loihica (strain ATCC BAA-1088 / PV-4).